A 385-amino-acid chain; its full sequence is ATP phosphoribosyltransferase regulatory subunit (385 aa).

The protein belongs to the class-II aminoacyl-tRNA synthetase family. HisZ subfamily. Heteromultimer composed of HisG and HisZ subunits.

It is found in the cytoplasm. It functions in the pathway amino-acid biosynthesis; L-histidine biosynthesis; L-histidine from 5-phospho-alpha-D-ribose 1-diphosphate: step 1/9. Required for the first step of histidine biosynthesis. May allow the feedback regulation of ATP phosphoribosyltransferase activity by histidine. The protein is ATP phosphoribosyltransferase regulatory subunit of Lysinibacillus sphaericus (strain C3-41).